Consider the following 257-residue polypeptide: tRNA pseudouridine synthase A (257 aa).

Aspartate 43 (nucleophile) is an active-site residue. Substrate is bound at residue tyrosine 94.

The protein belongs to the tRNA pseudouridine synthase TruA family.

The catalysed reaction is uridine(38/39/40) in tRNA = pseudouridine(38/39/40) in tRNA. Its function is as follows. Formation of pseudouridine at positions 38, 39 and 40 in the anticodon stem and loop of transfer RNAs. This chain is tRNA pseudouridine synthase A, found in Pyrobaculum calidifontis (strain DSM 21063 / JCM 11548 / VA1).